The primary structure comprises 284 residues: uncharacterized protein (284 aa).

This is an uncharacterized protein from Methanothermobacter thermautotrophicus (Methanobacterium thermoformicicum).